Here is a 384-residue protein sequence, read N- to C-terminus: Alkanesulfonate monooxygenase (384 aa).

Belongs to the SsuD family.

The catalysed reaction is an alkanesulfonate + FMNH2 + O2 = an aldehyde + FMN + sulfite + H2O + 2 H(+). Catalyzes the desulfonation of aliphatic sulfonates. The sequence is that of Alkanesulfonate monooxygenase from Burkholderia thailandensis (strain ATCC 700388 / DSM 13276 / CCUG 48851 / CIP 106301 / E264).